The following is a 279-amino-acid chain: uncharacterized protein (279 aa).

Disordered regions lie at residues 50-109 (YTYN…YNKN) and 249-279 (SQSQ…SPKL). Positions 68–109 (NNNSNYNNNNNNNNNNNNNNNNNNNNNNNKNNNNNNYNYNKN) are enriched in low complexity.

This is an uncharacterized protein from Dictyostelium discoideum (Social amoeba).